Reading from the N-terminus, the 731-residue chain is Beta-galactosidase (731 aa).

A signal peptide spans 1–23 (MGVGIQTMWSILLLFSCIFSAAS). Catalysis depends on Glu-182, which acts as the Proton donor. The Nucleophile role is filled by Glu-251. The N-linked (GlcNAc...) asparagine glycan is linked to Asn-459.

The protein belongs to the glycosyl hydrolase 35 family.

The protein localises to the secreted. Its subcellular location is the extracellular space. The protein resides in the apoplast. The enzyme catalyses Hydrolysis of terminal non-reducing beta-D-galactose residues in beta-D-galactosides.. Involved in cell wall degradation. Degrades polysaccharides containing beta-(1--&gt;4)-linked galactans, acting as an exo-(1--&gt;4)-beta-D-galactanase. In Malus domestica (Apple), this protein is Beta-galactosidase.